We begin with the raw amino-acid sequence, 350 residues long: Small ribosomal subunit biogenesis GTPase RsgA (350 aa).

The segment at 1 to 30 is disordered; sequence MSKRKLTQNQQRRIQSNNAKTLHRHQHRHK. The span at 7–20 shows a compositional bias: polar residues; it reads TQNQQRRIQSNNAK. Residues 21–30 show a composition bias toward basic residues; it reads TLHRHQHRHK. Residues 106–274 enclose the CP-type G domain; the sequence is HNQIVRPDYY…LIDSPGIREF (169 aa). GTP-binding positions include 162-165 and 216-224; these read NKAD and GQSGVGKSS. The Zn(2+) site is built by cysteine 298, cysteine 303, histidine 305, and cysteine 311.

It belongs to the TRAFAC class YlqF/YawG GTPase family. RsgA subfamily. As to quaternary structure, monomer. Associates with 30S ribosomal subunit, binds 16S rRNA. Zn(2+) serves as cofactor.

The protein resides in the cytoplasm. In terms of biological role, one of several proteins that assist in the late maturation steps of the functional core of the 30S ribosomal subunit. Helps release RbfA from mature subunits. May play a role in the assembly of ribosomal proteins into the subunit. Circularly permuted GTPase that catalyzes slow GTP hydrolysis, GTPase activity is stimulated by the 30S ribosomal subunit. This Histophilus somni (strain 129Pt) (Haemophilus somnus) protein is Small ribosomal subunit biogenesis GTPase RsgA.